Reading from the N-terminus, the 127-residue chain is Fluoride-specific ion channel FluC 1 (127 aa).

4 helical membrane passes run 4–24, 35–55, 71–91, and 101–121; these read TLLAVFIGGGVGSMARWLVSL, VGTLIVNLVGAFIIGLTLALF, TGFCGGLTTFSTFSVEVVYLI, and GTILLNVAGSLAMTMLAFILV. Na(+) contacts are provided by Gly75 and Thr78.

It belongs to the fluoride channel Fluc/FEX (TC 1.A.43) family.

The protein resides in the cell inner membrane. The catalysed reaction is fluoride(in) = fluoride(out). Its activity is regulated as follows. Na(+) is not transported, but it plays an essential structural role and its presence is essential for fluoride channel function. Fluoride-specific ion channel. Important for reducing fluoride concentration in the cell, thus reducing its toxicity. This is Fluoride-specific ion channel FluC 1 from Yersinia pseudotuberculosis serotype I (strain IP32953).